The sequence spans 116 residues: Hydrogenase maturation factor HypA (116 aa).

A Ni(2+)-binding site is contributed by histidine 2. Cysteine 73, cysteine 76, cysteine 90, and cysteine 93 together coordinate Zn(2+).

This sequence belongs to the HypA/HybF family.

Its function is as follows. Involved in the maturation of [NiFe] hydrogenases. Required for nickel insertion into the metal center of the hydrogenase. The polypeptide is Hydrogenase maturation factor HypA (Escherichia coli O6:H1 (strain CFT073 / ATCC 700928 / UPEC)).